We begin with the raw amino-acid sequence, 106 residues long: ATP-dependent Clp protease adapter protein ClpS (106 aa).

Positions 1 to 14 (MTDKAGDWQEHGPQ) are enriched in basic and acidic residues. The tract at residues 1–21 (MTDKAGDWQEHGPQVEEAPPQ) is disordered.

This sequence belongs to the ClpS family. As to quaternary structure, binds to the N-terminal domain of the chaperone ClpA.

In terms of biological role, involved in the modulation of the specificity of the ClpAP-mediated ATP-dependent protein degradation. This is ATP-dependent Clp protease adapter protein ClpS from Alkalilimnicola ehrlichii (strain ATCC BAA-1101 / DSM 17681 / MLHE-1).